The sequence spans 427 residues: Enolase (427 aa).

Glutamine 163 serves as a coordination point for (2R)-2-phosphoglycerate. The active-site Proton donor is glutamate 205. Aspartate 242, glutamate 285, and aspartate 312 together coordinate Mg(2+). 4 residues coordinate (2R)-2-phosphoglycerate: lysine 337, arginine 366, serine 367, and lysine 388. Lysine 337 acts as the Proton acceptor in catalysis.

This sequence belongs to the enolase family. Requires Mg(2+) as cofactor.

Its subcellular location is the cytoplasm. The protein localises to the secreted. It localises to the cell surface. It carries out the reaction (2R)-2-phosphoglycerate = phosphoenolpyruvate + H2O. It functions in the pathway carbohydrate degradation; glycolysis; pyruvate from D-glyceraldehyde 3-phosphate: step 4/5. Functionally, catalyzes the reversible conversion of 2-phosphoglycerate (2-PG) into phosphoenolpyruvate (PEP). It is essential for the degradation of carbohydrates via glycolysis. The chain is Enolase from Paraburkholderia phytofirmans (strain DSM 17436 / LMG 22146 / PsJN) (Burkholderia phytofirmans).